The primary structure comprises 349 residues: Phenylalanine--tRNA ligase alpha subunit (349 aa).

Residue Glu259 coordinates Mg(2+).

It belongs to the class-II aminoacyl-tRNA synthetase family. Phe-tRNA synthetase alpha subunit type 1 subfamily. Tetramer of two alpha and two beta subunits. Mg(2+) is required as a cofactor.

It localises to the cytoplasm. It catalyses the reaction tRNA(Phe) + L-phenylalanine + ATP = L-phenylalanyl-tRNA(Phe) + AMP + diphosphate + H(+). This is Phenylalanine--tRNA ligase alpha subunit from Lactobacillus gasseri (strain ATCC 33323 / DSM 20243 / BCRC 14619 / CIP 102991 / JCM 1131 / KCTC 3163 / NCIMB 11718 / NCTC 13722 / AM63).